We begin with the raw amino-acid sequence, 246 residues long: Probable transcriptional regulatory protein Pden_1905 (246 aa).

A disordered region spans residues 1–21 (MAGHSKWANIQHRKGKQDKLR).

It belongs to the TACO1 family.

The protein resides in the cytoplasm. In Paracoccus denitrificans (strain Pd 1222), this protein is Probable transcriptional regulatory protein Pden_1905.